Here is a 45-residue protein sequence, read N- to C-terminus: Photosystem II reaction center protein K (45 aa).

The propeptide occupies 1 to 8; it reads MFSINFLG. Residues 17–37 form a helical membrane-spanning segment; sequence FDPIVDVLPIIPLLFLLLAFV.

It belongs to the PsbK family. As to quaternary structure, PSII is composed of 1 copy each of membrane proteins PsbA, PsbB, PsbC, PsbD, PsbE, PsbF, PsbH, PsbI, PsbJ, PsbK, PsbL, PsbM, PsbT, PsbY, PsbZ, Psb30/Ycf12, at least 3 peripheral proteins of the oxygen-evolving complex and a large number of cofactors. It forms dimeric complexes.

The protein resides in the plastid. It is found in the chloroplast thylakoid membrane. In terms of biological role, one of the components of the core complex of photosystem II (PSII). PSII is a light-driven water:plastoquinone oxidoreductase that uses light energy to abstract electrons from H(2)O, generating O(2) and a proton gradient subsequently used for ATP formation. It consists of a core antenna complex that captures photons, and an electron transfer chain that converts photonic excitation into a charge separation. This Euglena viridis (Cercaria viridis) protein is Photosystem II reaction center protein K.